A 147-amino-acid chain; its full sequence is Large ribosomal subunit protein bL9 (147 aa).

It belongs to the bacterial ribosomal protein bL9 family.

Binds to the 23S rRNA. This Thermoanaerobacter pseudethanolicus (strain ATCC 33223 / 39E) (Clostridium thermohydrosulfuricum) protein is Large ribosomal subunit protein bL9.